The primary structure comprises 415 residues: Gamma-glutamyl phosphate reductase (415 aa).

It belongs to the gamma-glutamyl phosphate reductase family.

The protein localises to the cytoplasm. It carries out the reaction L-glutamate 5-semialdehyde + phosphate + NADP(+) = L-glutamyl 5-phosphate + NADPH + H(+). Its pathway is amino-acid biosynthesis; L-proline biosynthesis; L-glutamate 5-semialdehyde from L-glutamate: step 2/2. Functionally, catalyzes the NADPH-dependent reduction of L-glutamate 5-phosphate into L-glutamate 5-semialdehyde and phosphate. The product spontaneously undergoes cyclization to form 1-pyrroline-5-carboxylate. In Bacillus thuringiensis subsp. konkukian (strain 97-27), this protein is Gamma-glutamyl phosphate reductase.